Here is a 561-residue protein sequence, read N- to C-terminus: PR domain zinc finger protein 14 (561 aa).

Residues 1-20 (MALPPSGETQSQDKANYLPQ) are disordered. Polar residues predominate over residues 7-20 (GETQSQDKANYLPQ). The interaction with CBFA2T2 stretch occupies residues 184-373 (GFNFTEEELS…GVPMNLRVTE (190 aa)). Residues 241–356 (EGLCLMQTSF…RNQELLVWYG (116 aa)) form the SET domain. Tyr-355 serves as a coordination point for S-adenosyl-L-methionine. A C2H2-type 1; atypical zinc finger spans residues 390-416 (YRCERCGKVFTYKYYRDKHLKYTPCVD). 5 consecutive C2H2-type zinc fingers follow at residues 422-445 (FPCSLCQRSFEKRDRLRIHILHVH), 451-473 (YLCSTCGKSFSQSSSLNKHMRVH), 479-501 (YQCVYCTKKFTASSILRTHIRQH), 507-530 (FKCKHCGKAFASHAAHDSHVRRSH), and 536-558 (SSCDICGKGFLDQEAFYAHMRLH).

It belongs to the class V-like SAM-binding methyltransferase superfamily. In terms of assembly, interacts with CBFA2T2. Restricted to embryonic stem cells and primordial germ cells. Not detected in epiblast-derived stem cells.

The protein localises to the nucleus. Transcription factor that has both positive and negative roles on transcription. Plays a role in cellular pluripotency. Essential for germ cell development at 2 levels: the reacquisition of potential pluripotency, including SOX2 up-regulation, and successful epigenetic reprogramming, characterized by EHMT1 repression. Its association with CBFA2T2 is required for the functions in pluripotency and germ cell formation. The sequence is that of PR domain zinc finger protein 14 (Prdm14) from Mus musculus (Mouse).